We begin with the raw amino-acid sequence, 423 residues long: Glucose-1-phosphate adenylyltransferase (423 aa).

Alpha-D-glucose 1-phosphate is bound by residues Tyr-108, Gly-173, 188-189, and Ser-207; that span reads EK.

This sequence belongs to the bacterial/plant glucose-1-phosphate adenylyltransferase family. In terms of assembly, homotetramer.

The enzyme catalyses alpha-D-glucose 1-phosphate + ATP + H(+) = ADP-alpha-D-glucose + diphosphate. It functions in the pathway glycan biosynthesis; glycogen biosynthesis. Involved in the biosynthesis of ADP-glucose, a building block required for the elongation reactions to produce glycogen. Catalyzes the reaction between ATP and alpha-D-glucose 1-phosphate (G1P) to produce pyrophosphate and ADP-Glc. The polypeptide is Glucose-1-phosphate adenylyltransferase (Francisella tularensis subsp. holarctica (strain FTNF002-00 / FTA)).